Here is a 350-residue protein sequence, read N- to C-terminus: MMKVRPVERRDLADIFELAGKTGVGMTSLPQNEQHLAARIERALNTWQGSLDPGEQGYLFVLEDSEQQKVVGVSAIEVAVGLNDPWYNFRVGTLVHASKALNVYKSVPTLFLSNDHTGYSELCTLFLDPDYRKDKNGPFLSKVRFLFIAAFRQYFSRKVIAEMRGYTDEQGRSPFWESVGRHFFSIEFAKADYLSGTGQKAFIAELMPKHPLYVDFLAEEARAVIGQVHPHTTPARAVLETEGLQYQGYVDIFDGGPTLEANTDDVRAVRDSSKRTVVIKDYDIEDYDIDPNGRLYLVANDHYHHFRAILMNTHLSDERLRLTPESAEALGVAAGDSVRIVSLFAPETKR.

Residue Leu-125 participates in succinyl-CoA binding. Catalysis depends on His-229, which acts as the Proton donor.

Belongs to the arginine N-succinyltransferase family.

The enzyme catalyses succinyl-CoA + L-arginine = N(2)-succinyl-L-arginine + CoA + H(+). The protein operates within amino-acid degradation; L-arginine degradation via AST pathway; L-glutamate and succinate from L-arginine: step 1/5. Catalyzes the transfer of succinyl-CoA to arginine to produce N(2)-succinylarginine. The protein is Arginine N-succinyltransferase of Yersinia pseudotuberculosis serotype O:3 (strain YPIII).